The sequence spans 513 residues: Probable cytosol aminopeptidase (513 aa).

Positions 277 and 282 each coordinate Mn(2+). Lysine 289 is an active-site residue. Mn(2+) is bound by residues aspartate 300, aspartate 359, and glutamate 361. Arginine 363 is an active-site residue.

Belongs to the peptidase M17 family. The cofactor is Mn(2+).

It localises to the cytoplasm. It catalyses the reaction Release of an N-terminal amino acid, Xaa-|-Yaa-, in which Xaa is preferably Leu, but may be other amino acids including Pro although not Arg or Lys, and Yaa may be Pro. Amino acid amides and methyl esters are also readily hydrolyzed, but rates on arylamides are exceedingly low.. It carries out the reaction Release of an N-terminal amino acid, preferentially leucine, but not glutamic or aspartic acids.. Functionally, presumably involved in the processing and regular turnover of intracellular proteins. Catalyzes the removal of unsubstituted N-terminal amino acids from various peptides. In Mycobacterium sp. (strain KMS), this protein is Probable cytosol aminopeptidase.